The following is a 326-amino-acid chain: DNA-binding death effector domain-containing protein 2 (326 aa).

In terms of domain architecture, DED spans 25 to 104 (SLHRMFEVVG…RHDLLPHLAR (80 aa)). Residues 104 to 109 (RKRRRP) carry the Nuclear localization signal motif. Residues 104–194 (RKRRRPVSPE…PARPSSEGKV (91 aa)) form a disordered region. Residues 136-146 (SSSSANSQQGQ) show a composition bias toward low complexity. The short motif at 155–173 (KRQRRSRGRPSGGARRRRR) is the Bipartite nuclear localization signal element. A compositionally biased stretch (basic residues) spans 155–174 (KRQRRSRGRPSGGARRRRRG). The span at 175–191 (APAAPQQQSEPARPSSE) shows a compositional bias: low complexity.

In terms of assembly, interacts with CASP8, CASP10 and GTF3C3. Homodimerizes and heterodimerizes with DEDD. As to expression, expressed in most tissues. High levels were found in liver, kidney, heart, ovary, spleen, testes, skeletal muscle and peripheral blood leukocytes. Expression was absent or low in colon and small intestine. Expression is relatively high in the tumor cell lines chronic myologenous leukemia K-562 and the colorectal adenocarcinoma SW480. Expression is moderate in the cervical carcinoma HeLa, the Burkitt's lymphoma Raji, the lung carcinoma A-549, and the melanoma G-361. In contrast, two leukemia cell lines, HL-60 (promyelocytic leukemia) and MOLT-4 (lymphoblastic leukemia), show relatively low levels.

It is found in the nucleus. The protein resides in the nucleolus. May play a critical role in death receptor-induced apoptosis and may target CASP8 and CASP10 to the nucleus. May regulate degradation of intermediate filaments during apoptosis. May play a role in the general transcription machinery in the nucleus and might be an important regulator of the activity of GTF3C3. The polypeptide is DNA-binding death effector domain-containing protein 2 (DEDD2) (Homo sapiens (Human)).